A 288-amino-acid polypeptide reads, in one-letter code: ATP synthase gamma chain (288 aa).

It belongs to the ATPase gamma chain family. F-type ATPases have 2 components, CF(1) - the catalytic core - and CF(0) - the membrane proton channel. CF(1) has five subunits: alpha(3), beta(3), gamma(1), delta(1), epsilon(1). CF(0) has three main subunits: a, b and c.

The protein localises to the cell inner membrane. In terms of biological role, produces ATP from ADP in the presence of a proton gradient across the membrane. The gamma chain is believed to be important in regulating ATPase activity and the flow of protons through the CF(0) complex. This is ATP synthase gamma chain from Rickettsia prowazekii (strain Madrid E).